We begin with the raw amino-acid sequence, 349 residues long: Phenylalanine--tRNA ligase alpha subunit (349 aa).

E259 contacts Mg(2+).

The protein belongs to the class-II aminoacyl-tRNA synthetase family. Phe-tRNA synthetase alpha subunit type 1 subfamily. As to quaternary structure, tetramer of two alpha and two beta subunits. Mg(2+) is required as a cofactor.

The protein localises to the cytoplasm. It catalyses the reaction tRNA(Phe) + L-phenylalanine + ATP = L-phenylalanyl-tRNA(Phe) + AMP + diphosphate + H(+). The polypeptide is Phenylalanine--tRNA ligase alpha subunit (Lactobacillus acidophilus (strain ATCC 700396 / NCK56 / N2 / NCFM)).